The primary structure comprises 85 residues: Large ribosomal subunit protein bL27 (85 aa).

The tract at residues 1 to 23 (MAHKKAGGSTRNGRDSESKRLGV) is disordered.

It belongs to the bacterial ribosomal protein bL27 family.

This Thioalkalivibrio sulfidiphilus (strain HL-EbGR7) protein is Large ribosomal subunit protein bL27.